The following is a 447-amino-acid chain: GTPase Der (447 aa).

EngA-type G domains are found at residues 3-167 (PVVA…NLPD) and 181-354 (IKLA…KSAT). Residues 9–16 (GRPNVGKS), 56–60 (DTGGF), 119–122 (NKAE), 187–194 (GRPNVGKS), 234–238 (DTAGL), and 299–302 (NKWD) contribute to the GTP site. Positions 355 to 439 (RKMSTPVLTR…PLRIQFKSSQ (85 aa)) constitute a KH-like domain.

The protein belongs to the TRAFAC class TrmE-Era-EngA-EngB-Septin-like GTPase superfamily. EngA (Der) GTPase family. In terms of assembly, associates with the 50S ribosomal subunit.

Functionally, GTPase that plays an essential role in the late steps of ribosome biogenesis. This chain is GTPase Der, found in Variovorax paradoxus (strain S110).